Here is a 322-residue protein sequence, read N- to C-terminus: Germ cell-specific gene 1-like protein (322 aa).

Residues 1 to 8 (MKTSRRGR) lie on the Cytoplasmic side of the membrane. The helical transmembrane segment at 9–29 (ALLAVALNLLALLFATTAFLT) threads the bilayer. At 30–122 (TYWCQGTQRV…FIDLAPASEK (93 aa)) the chain is on the extracellular side. The helical transmembrane segment at 123-143 (GVLWLSVVSEVLYILLLVVGF) threads the bilayer. Over 144–163 (SLMCLELLHSSSVIDGLKLN) the chain is Cytoplasmic. The helical transmembrane segment at 164-184 (AFAAVFTVLSGLLGMVAHMMY) threads the bilayer. The Extracellular portion of the chain corresponds to 185–207 (TQVFQVTVSLGPEDWRPHSWDYG). The helical transmembrane segment at 208-228 (WSFCLAWGSFTCCMAASVTTL) threads the bilayer. The Cytoplasmic portion of the chain corresponds to 229–322 (NSYTKTVIEF…RQCWVLGHWV (94 aa)). Position 274 is a phosphoserine (serine 274).

Belongs to the GSG1 family. As to quaternary structure, component of the inner core of AMPAR complexes. AMPAR complexes consist of an inner core made of 4 pore-forming GluA/GRIA proteins (GRIA1, GRIA2, GRIA3 and GRIA4) and 4 major auxiliary subunits arranged in a twofold symmetry. One of the two pairs of distinct binding sites is occupied either by CNIH2, CNIH3 or CACNG2, CACNG3. The other harbors CACNG2, CACNG3, CACNG4, CACNG8 or GSG1L. This inner core of AMPAR complexes is complemented by outer core constituents binding directly to the GluA/GRIA proteins at sites distinct from the interaction sites of the inner core constituents. Outer core constituents include at least PRRT1, PRRT2, CKAMP44/SHISA9, FRRS1L and NRN1. The proteins of the inner and outer core serve as a platform for other, more peripherally associated AMPAR constituents. Alone or in combination, these auxiliary subunits control the gating and pharmacology of the AMPAR complexes and profoundly impact their biogenesis and protein processing. In terms of tissue distribution, expressed in the brain (at protein level).

It is found in the cell membrane. It localises to the synapse. Its function is as follows. As a component of the inner core of AMPAR complexes, modifies AMPA receptor (AMPAR) gating. The polypeptide is Germ cell-specific gene 1-like protein (Gsg1l) (Rattus norvegicus (Rat)).